Consider the following 587-residue polypeptide: 65-kDa microtubule-associated protein 1 (587 aa).

Coiled coils occupy residues 46–84 (QECL…TMSL), 151–181 (DESD…LRKV), 234–257 (LTLK…LIDL), 290–317 (ALAR…MKEI), and 461–489 (AMLD…VQEQ). A compositionally biased stretch (basic and acidic residues) spans 474-494 (EEEKRRLREQKKVQEQPHVEQ). The disordered stretch occupies residues 474–587 (EEEKRRLREQ…AADHQVPASP (114 aa)). Residue Ser503 is modified to Phosphoserine. The residue at position 526 (Thr526) is a Phosphothreonine. Residues 531–542 (LSLNANQNGSRS) are compositionally biased toward polar residues. Phosphoserine occurs at positions 532 and 540. Residues Thr543 and Thr552 each carry the phosphothreonine modification. A compositionally biased stretch (basic and acidic residues) spans 543-553 (TAKEAGRRETL). Ser573, Ser576, and Ser586 each carry phosphoserine.

Belongs to the MAP65/ASE1 family. As to quaternary structure, forms dimer. Binds to MT, mostly with coaligned MT, both between parallel or antiparallel, forming thick bundles. Interacts with the alpha-tubulin subunit of the tubulin heterodimer. Bundles polymerized MT via the formation of 25-nm crossbridges at specific stages of the cell cycle (e.g. bundles microtubules in interphase, anaphase and telophase but does not bind microtubules in prophase or metaphase), at the plus-end, the minus-end, or along the entire length of MT, and along phragmoplast MT. Interacts with SH3P1 and MPK4. Post-translationally, basal phosphorylation at all stages of the cell cycle. MT-binding properties inhibited by hyperphosphorylation mediated by CDKs and/or MAPKs (e.g. ANP2, ANP3, MPK4 and MPK6) during prometaphase and metaphase. Expressed in all organs and tissues with the exception of sepals and anthers. Bound to subsets of microtubules in the cells of root epidermis, hypocotyl and cotyledons (at protein level).

Its subcellular location is the nucleus. The protein resides in the cytoplasm. It localises to the cytoskeleton. It is found in the spindle. The protein localises to the phragmoplast. Its subcellular location is the cell cortex. Functionally, microtubule-associated protein that bundle and stabilize adjacent microtubules (MT) of the cell cortex. Enhances MT nucleation. Can also bind to tubulin dimers and promotes their polymerization. Confers MT resistance to the drug propyzamide and cold conditions. Plays a role in the central spindle at anaphase to early cytokinesis but is not essential at the midline of the phragmoplast at later stages. Represses metaphase spindle organization and the transition to anaphase in dephosphorylated active form. Promotes the formation of a planar network of antiparallel microtubules. May be involved in stomatal movement modulation by regulating the dynamic and arrangement of cortical MT. The sequence is that of 65-kDa microtubule-associated protein 1 (MAP65-1) from Arabidopsis thaliana (Mouse-ear cress).